A 198-amino-acid chain; its full sequence is MASGNARIGKPAPDFKATAVVDGAFKEVKLSDYKGKYVVLFFYPLDFTFVCPTEIIAFSNRAEDFRKLGCEVLGVSVDSQFTHLAWINTPRKEGGLGPLNIPLLADVTRRLSEDYGVLKTDEGIAYRGLFIIDGKGVLRQITVNDLPVGRSVDEALRLVQAFQYTDEHGEVCPAGWKPGSDTIKPNVDDSKEYFSKHN.

Ala2 bears the N-acetylalanine mark. One can recognise a Thioredoxin domain in the interval 6–164 (ARIGKPAPDF…ALRLVQAFQY (159 aa)). Cys51 serves as the catalytic Cysteine sulfenic acid (-SOH) intermediate. Ser112 carries the phosphoserine modification. Residue Thr182 is modified to Phosphothreonine. Lys196 carries the N6-acetyllysine modification.

The protein belongs to the peroxiredoxin family. AhpC/Prx1 subfamily. In terms of assembly, homodimer; disulfide-linked, upon oxidation. 5 homodimers assemble to form a ring-like decamer. Interacts with TIPIN. The enzyme can be inactivated by further oxidation of the cysteine sulfenic acid (C(P)-SOH) to sulphinic acid (C(P)-SO2H) instead of its condensation to a disulfide bond. It can be reactivated by forming a transient disulfide bond with sulfiredoxin SRXN1, which reduces the cysteine sulfinic acid in an ATP- and Mg-dependent manner. In terms of processing, acetylation increases resistance to transition to high molecular-mass complexes. Deacetylated by HDAC6 which decreases reducing activity.

Its subcellular location is the cytoplasm. The enzyme catalyses a hydroperoxide + [thioredoxin]-dithiol = an alcohol + [thioredoxin]-disulfide + H2O. Thiol-specific peroxidase that catalyzes the reduction of hydrogen peroxide and organic hydroperoxides to water and alcohols, respectively. Plays a role in cell protection against oxidative stress by detoxifying peroxides and as sensor of hydrogen peroxide-mediated signaling events. Might participate in the signaling cascades of growth factors and tumor necrosis factor-alpha by regulating the intracellular concentrations of H(2)O(2). The protein is Peroxiredoxin-2 (PRDX2) of Macaca fascicularis (Crab-eating macaque).